Consider the following 253-residue polypeptide: Chorismate mutase 2, cytosolic (253 aa).

In terms of domain architecture, Chorismate mutase spans 2 to 253 (DAAGGDQLSL…EVEYLLRRLD (252 aa)).

As to quaternary structure, homodimer. Interacts with Cmu1 of the fungal pathogen Ustilago maydis.

The protein resides in the cytoplasm. It localises to the cytosol. It catalyses the reaction chorismate = prephenate. It functions in the pathway metabolic intermediate biosynthesis; prephenate biosynthesis; prephenate from chorismate: step 1/1. With respect to regulation, no allosteric regulation. The protein is Chorismate mutase 2, cytosolic of Zea mays (Maize).